We begin with the raw amino-acid sequence, 136 residues long: Ig heavy chain V-A2 region P-MU-3 (136 aa).

Residues 1-19 (METGLRWLLLVAVLKGVQC) form the signal peptide. Gln20 is subject to Pyrrolidone carboxylic acid. The 108-residue stretch at 20–127 (QSVKESEGGL…ENEFFNAIWG (108 aa)) folds into the Ig-like domain.

The protein is Ig heavy chain V-A2 region P-MU-3 of Oryctolagus cuniculus (Rabbit).